Here is a 157-residue protein sequence, read N- to C-terminus: Transcriptional repressor NrdR (157 aa).

A disordered region spans residues 1-24; it reads MRCPKCGGNKSSVVDSRQAEDGNT. A zinc finger lies at 3-34; sequence CPKCGGNKSSVVDSRQAEDGNTIRRRRECEEC. The ATP-cone domain occupies 49-139; the sequence is LVVVKKDGTR…VYRSFKDVGE (91 aa).

Belongs to the NrdR family. It depends on Zn(2+) as a cofactor.

Negatively regulates transcription of bacterial ribonucleotide reductase nrd genes and operons by binding to NrdR-boxes. This is Transcriptional repressor NrdR from Streptococcus sanguinis (strain SK36).